An 862-amino-acid polypeptide reads, in one-letter code: MMDSVLEEDVTLLGTLSGCSGLVPNVPDDLDGINPDARLGNGVLSNVSEETVSPTRARNMKDFENQITELKKENFNLKLRIYFLEERMQQEFHGPAEHIYKTNIELKVEVESLKRELQERERLLIRASKAVESLAEAGGSEIQRVKEDARKKVQQVEDLLTKRILLLEKDVKAAQAELEKAFAGTETEKALRLSLESKLSEMKKMHKGDLAMALVLDEKDRLIEELKLSLKSKEALIQCLKEEKSQMASPDENVSSGELRGLCAAPREEKERETEAAQMEHQKERNSFEERIQALEEDLREKEREIATEKKNSLKRDKAIQGLTMALKSKEKKVEELNSEIEKLSAAFAKAREALQKAQTQEFQGSENYEAALSGKEALLTELRSQNLTKSAENHRLRRSIKKITQELSDLQQERERLEKDLEEAHREKSRGDCTIRDLRNEVEKLRNEVNERKKAMENRYKNLLSESSKKLHNQEQVIKHLTERTNHKDMLLQKFNEKDLEVIQQNHYLMTAEDLELRSEGLITEKCPSQQSPGSKTIFSKEEKQSSDYQELIQVLKKEQDIYTHLVKSLQESDSINNLQAELNNIFALRKQLERDVLSYQNLRRTLEEQISEIRRREEESFSFYSDQTSYLSICLEENNRFQVEHFSQEELKKKVSDLIQLVKELYTDDQHLKKTIFDLSCMGFQGNGFPDRLVSTEQTEIMKDLSKGGCKNGYLRHTEPKILESDGAHTPGCLEEGVFINLLAPLFNEKATLLLESRPDLLKVVRELLLGHLCLAEQDVSGEHLGGKTEKTPKLHKKLFEQEKKLQNTMKLLQLSKRQEKVIFDQLVVTHKILRKARGNLELRPGGAHPGTCSPSRPGS.

The CM1 motif; interacts with the gTuRC stretch occupies residues 51–94; that stretch reads TVSPTRARNMKDFENQITELKKENFNLKLRIYFLEERMQQEFHG. The interaction with NCKAP5L stretch occupies residues 58 to 196; that stretch reads RNMKDFENQI…TEKALRLSLE (139 aa). S547 bears the Phosphoserine mark. The tract at residues 830-839 is required for centrosomal attachment, Golgi localization and CALM1 interaction; that stretch reads VVTHKILRKA. S862 carries the post-translational modification Phosphoserine.

In terms of assembly, homodimer. Interacts with CDK5R1 (p35 form). CDK5RAP1, CDK5RAP2 and CDK5RAP3 show competitive binding to CDK5R1. May form a complex with CDK5R1 and CDK5. Interacts with pericentrin/PCNT; the interaction is leading to centrosomal and Golgi localization of CDK5RAP2 and PCNT. Interacts with AKAP9; the interaction targets CDK5RAP2 and AKAP9 to Golgi apparatus. Interacts with MAPRE1; the interaction is direct and targets CDK5RAP2 and EB1/MAPRE1 to microtubule plus ends. Interacts with TUBG1; the interaction is leading to the centrosomal localization of CDK5RAP2 and TUBG1. Interacts with TUBGCP3. Interacts with CALM1. Interacts with CDC20. Interacts with CEP68; degradation of CEP68 in early mitosis leads to removal of CDK5RAP2 from the centrosome which promotes centriole disengagement and subsequent centriole separation. Interacts with NCKAP5L. Forms a pericentrosomal complex with AKAP9, MAPRE1 and PDE4DIP isoform 13/MMG8/SMYLE; within this complex, MAPRE1 binding to CDK5RAP2 may be mediated by PDE4DIP. Interacts with LGALS3BP; this interaction may connect the pericentrosomal complex to the gamma-tubulin ring complex (gTuRC) to promote microtubule assembly and acetylation. Interacts with CCDC66. Associates (via CM1 motif) with TUBGCP2 of the gTuRC; the interaction plays a role in gTuRC activation. Post-translationally, phosphorylated in vitro by CDK5.

The protein resides in the cytoplasm. It localises to the cytoskeleton. Its subcellular location is the microtubule organizing center. It is found in the centrosome. The protein localises to the golgi apparatus. In terms of biological role, potential regulator of CDK5 activity via its interaction with CDK5R1. Negative regulator of centriole disengagement (licensing) which maintains centriole engagement and cohesion. Involved in regulation of mitotic spindle orientation. Plays a role in the spindle checkpoint activation by acting as a transcriptional regulator of both BUBR1 and MAD2 promoter. Together with EB1/MAPRE1, may promote microtubule polymerization, bundle formation, growth and dynamics at the plus ends. Regulates centrosomal maturation by recruitment of the gamma-tubulin ring complex (gTuRC) onto centrosomes. In complex with PDE4DIP isoform 13/MMG8/SMYLE, MAPRE1 and AKAP9, contributes to microtubules nucleation and extension from the centrosome to the cell periphery. Required for the recruitment of AKAP9 to centrosomes. Plays a role in neurogenesis. The protein is CDK5 regulatory subunit-associated protein 2 (CDK5RAP2) of Macaca fascicularis (Crab-eating macaque).